The chain runs to 250 residues: Protein lin-28 homolog B (250 aa).

2 disordered regions span residues M1 to L27 and R98 to G126. Positions G9–E18 are enriched in basic and acidic residues. The CSD domain maps to H29–P102. Residues P114–K125 are compositionally biased toward basic residues. CCHC-type zinc fingers lie at residues D127–L144 and K149–H166. Residues C129, C132, H137, C142, C151, C154, H159, and C164 each coordinate Zn(2+). The segment at P165 to T250 is disordered. The segment covering T168–Q177 has biased composition (polar residues). Positions G200 to E209 are enriched in low complexity. The segment covering G210–G219 has biased composition (basic and acidic residues).

The protein belongs to the lin-28 family.

The protein localises to the nucleus. The protein resides in the nucleolus. Suppressor of specific microRNA (miRNA) biogenesis. Binds target primary miRNA transcripts and sequester them in the nucleolus, away from the microprocessor complex, hence preventing their processing into mature miRNA. The specific interaction with target pri-miRNAs occurs via an 5'-GGAG-3' motif in the pre-miRNA terminal loop. This chain is Protein lin-28 homolog B (LIN28B), found in Gallus gallus (Chicken).